Reading from the N-terminus, the 315-residue chain is Neuroguidin (315 aa).

Residue Ala2 is modified to N-acetylalanine. Residues 13–41 adopt a coiled-coil conformation; it reads SAVTLLKNLQEQVMAVTAQVKSLTQKVQA. A necessary for interaction with EIF4E region spans residues 41–174; it reads AGAYPTEKGL…KGVSKKYVPP (134 aa). A phosphoserine mark is found at Ser121, Ser142, and Ser143. A disordered region spans residues 124–169; sequence ENDPLRFKPHPSNMMSKLSSEDEEEDEAEDDQSEASGKKSVKGVSK. Acidic residues predominate over residues 144–156; sequence EDEEEDEAEDDQS. A coiled-coil region spans residues 181–205; sequence YDETEAEREKKRLERAKRRALSSSV. Phosphoserine occurs at positions 204 and 214. The interval 277 to 315 is disordered; that stretch reads DISALTGGTVHLDEDQNPIKKRKKIPQKGRKKKGFRRRR. Over residues 295–315 the composition is skewed to basic residues; sequence IKKRKKIPQKGRKKKGFRRRR.

It belongs to the SAS10 family. Part of the small subunit (SSU) processome, composed of more than 70 proteins and the RNA chaperone small nucleolar RNA (snoRNA) U3. Interacts with CPEB1 and EIF4E.

It localises to the nucleus. The protein localises to the nucleolus. The protein resides in the chromosome. Its subcellular location is the centromere. It is found in the cytoplasm. It localises to the cell projection. The protein localises to the axon. The protein resides in the dendrite. Its subcellular location is the filopodium. In terms of biological role, part of the small subunit (SSU) processome, first precursor of the small eukaryotic ribosomal subunit. During the assembly of the SSU processome in the nucleolus, many ribosome biogenesis factors, an RNA chaperone and ribosomal proteins associate with the nascent pre-rRNA and work in concert to generate RNA folding, modifications, rearrangements and cleavage as well as targeted degradation of pre-ribosomal RNA by the RNA exosome. Its dissociation from the complex determines the transition from state pre-A1 to state pre-A1*. Inhibits mRNA translation in a cytoplasmic polyadenylation element (CPE)-dependent manner. The protein is Neuroguidin of Homo sapiens (Human).